Reading from the N-terminus, the 280-residue chain is Acyl-[acyl-carrier-protein]--UDP-N-acetylglucosamine O-acyltransferase (280 aa).

Belongs to the transferase hexapeptide repeat family. LpxA subfamily. As to quaternary structure, homotrimer.

The protein localises to the cytoplasm. It catalyses the reaction a (3R)-hydroxyacyl-[ACP] + UDP-N-acetyl-alpha-D-glucosamine = a UDP-3-O-[(3R)-3-hydroxyacyl]-N-acetyl-alpha-D-glucosamine + holo-[ACP]. The protein operates within glycolipid biosynthesis; lipid IV(A) biosynthesis; lipid IV(A) from (3R)-3-hydroxytetradecanoyl-[acyl-carrier-protein] and UDP-N-acetyl-alpha-D-glucosamine: step 1/6. Its function is as follows. Involved in the biosynthesis of lipid A, a phosphorylated glycolipid that anchors the lipopolysaccharide to the outer membrane of the cell. This chain is Acyl-[acyl-carrier-protein]--UDP-N-acetylglucosamine O-acyltransferase, found in Chlamydia trachomatis serovar A (strain ATCC VR-571B / DSM 19440 / HAR-13).